The sequence spans 418 residues: MEESESQAPVPPHGISLVSSPVRAVIRIRRKIRTMKKSRLQVDLTGERSLDSAKASLRRQISMDRASLFKSSTYEKQQYFNFDTPTLEKLALTSQIRKRNRNKSRHVLYPGNVRKCLPVEQKSKAKRCLLLFVGIVCFQIFNAIENLDDNLQKYDLDGLEKTLQREVFGQTRAIEKLMDHLKDYLATHYHNKPLVLSFNGPSGVGKSHTGRLLAKHFRSVVDNDFVLQYYTNHNCPNESDVIQCQAEVSAMISQMISRAEIEEKIPVFLFDEVEAMPVALLDVLHSYFQLNQSNEYLNVVYILISNIGGHEITKFVLQNVSNDFFNLPQELHQIVLSSLRKHHSLWDVAEIVPFTLLEKRHILDCFLDELLREGFYPDHSNIESLAGQLRYYIKGNKEFSISGCKQVVAKVNLLQPYT.

Residues C128–I144 form a helical membrane-spanning segment. G200–S207 serves as a coordination point for ATP.

This sequence belongs to the ClpA/ClpB family. Torsin subfamily.

The protein localises to the membrane. This Xenopus laevis (African clawed frog) protein is Torsin-4A-B (tor4a-b).